A 591-amino-acid polypeptide reads, in one-letter code: MRTHYCGNLNKSLAGQTVELCGWVNRRRDLGGLIFIDMRDREGIVQVVVDPDMKDVFEVASQLRNEFCIKFTGEVRVRPDSQVNKDMATGEVELLATGLEIINRSAALPLDFNQTNSEEQRLKYRYIDLRRPEMSDRIKLRARASSFVRRFLDENLFLDIETPVLTKATPEGARDYLVPSRVHKGSFYALPQSPQLFKQLLMMSGFDRYYQIVKCFRDEDLRADRQPEFTQIDIETSFMTSQEVRNVTERLVHDMWKELLDVELGQFPVMPFSEAMRRFGSDKPDLRNPLELVDVADLVKDVDFKVFSGPANDEKGRVAVIRVSGGASLSRKQIDEYGNFVGIYGAKGLAWMKVNDRAAGFEGVQSPVAKFLNEEVINAILERTQAETGDIILFGADKAGIVSEAMGALRLKLGTDLELTDTSAWAPLWVVDFPMFEEDGEGNLHAMHHPFTSPLGVSAEELQANPAAANSDAYDMVINGYEVGGGSVRIHNAEMQTAVFGILGIEAQEQQEKFGFLLEALKYGTPPHAGLAFGLDRLAMLLCGTENIRDVIAFPKTTAAACLLTDAPSLANPASLEELAIAVKLAEKKDA.

Glu171 is an L-aspartate binding site. Residues 195-198 (QLFK) are aspartate. Position 217 (Arg217) interacts with L-aspartate. Residues 217–219 (RDE) and Gln226 contribute to the ATP site. His448 is an L-aspartate binding site. Glu482 serves as a coordination point for ATP. Residue Arg489 participates in L-aspartate binding. Position 534 to 537 (534 to 537 (GLDR)) interacts with ATP.

This sequence belongs to the class-II aminoacyl-tRNA synthetase family. Type 1 subfamily. As to quaternary structure, homodimer.

The protein localises to the cytoplasm. It carries out the reaction tRNA(Asp) + L-aspartate + ATP = L-aspartyl-tRNA(Asp) + AMP + diphosphate. Functionally, catalyzes the attachment of L-aspartate to tRNA(Asp) in a two-step reaction: L-aspartate is first activated by ATP to form Asp-AMP and then transferred to the acceptor end of tRNA(Asp). In Aliivibrio fischeri (strain MJ11) (Vibrio fischeri), this protein is Aspartate--tRNA ligase.